The sequence spans 313 residues: Aspartate carbamoyltransferase catalytic subunit (313 aa).

The carbamoyl phosphate site is built by Arg51 and Thr52. Lys80 is a binding site for L-aspartate. Carbamoyl phosphate-binding residues include Arg101, His129, and Gln132. L-aspartate-binding residues include Arg162 and Arg224. 2 residues coordinate carbamoyl phosphate: Leu263 and Pro264.

This sequence belongs to the aspartate/ornithine carbamoyltransferase superfamily. ATCase family. As to quaternary structure, heterododecamer (2C3:3R2) of six catalytic PyrB chains organized as two trimers (C3), and six regulatory PyrI chains organized as three dimers (R2).

It catalyses the reaction carbamoyl phosphate + L-aspartate = N-carbamoyl-L-aspartate + phosphate + H(+). The protein operates within pyrimidine metabolism; UMP biosynthesis via de novo pathway; (S)-dihydroorotate from bicarbonate: step 2/3. In terms of biological role, catalyzes the condensation of carbamoyl phosphate and aspartate to form carbamoyl aspartate and inorganic phosphate, the committed step in the de novo pyrimidine nucleotide biosynthesis pathway. The sequence is that of Aspartate carbamoyltransferase catalytic subunit from Phocaeicola vulgatus (strain ATCC 8482 / DSM 1447 / JCM 5826 / CCUG 4940 / NBRC 14291 / NCTC 11154) (Bacteroides vulgatus).